Here is a 443-residue protein sequence, read N- to C-terminus: Xaa-Pro dipeptidase (443 aa).

5 residues coordinate Mn(2+): Asp-244, Asp-255, His-339, Glu-384, and Glu-423.

Belongs to the peptidase M24B family. Bacterial-type prolidase subfamily. Mn(2+) serves as cofactor.

It carries out the reaction Xaa-L-Pro dipeptide + H2O = an L-alpha-amino acid + L-proline. Its function is as follows. Splits dipeptides with a prolyl residue in the C-terminal position. The protein is Xaa-Pro dipeptidase of Pseudoalteromonas atlantica (strain T6c / ATCC BAA-1087).